The chain runs to 170 residues: Peptide deformylase (170 aa).

Positions 94 and 136 each coordinate Fe cation. Residue Glu-137 is part of the active site. His-140 contributes to the Fe cation binding site.

Belongs to the polypeptide deformylase family. It depends on Fe(2+) as a cofactor.

The catalysed reaction is N-terminal N-formyl-L-methionyl-[peptide] + H2O = N-terminal L-methionyl-[peptide] + formate. Functionally, removes the formyl group from the N-terminal Met of newly synthesized proteins. Requires at least a dipeptide for an efficient rate of reaction. N-terminal L-methionine is a prerequisite for activity but the enzyme has broad specificity at other positions. The chain is Peptide deformylase from Xylella fastidiosa (strain 9a5c).